A 374-amino-acid chain; its full sequence is Dihydrolipoyllysine-residue acetyltransferase component of acetoin cleaving system (374 aa).

The region spanning isoleucine 9 to alanine 84 is the Lipoyl-binding domain. The residue at position 50 (lysine 50) is an N6-lipoyllysine. Positions threonine 137–lysine 360 constitute an AB hydrolase-1 domain.

The cofactor is (R)-lipoate.

It catalyses the reaction N(6)-[(R)-dihydrolipoyl]-L-lysyl-[protein] + acetyl-CoA = N(6)-[(R)-S(8)-acetyldihydrolipoyl]-L-lysyl-[protein] + CoA. It functions in the pathway ketone degradation; acetoin degradation. In terms of biological role, dihydrolipoamide acetyltransferase involved in acetoin catabolism. The polypeptide is Dihydrolipoyllysine-residue acetyltransferase component of acetoin cleaving system (acoC) (Cupriavidus necator (strain ATCC 17699 / DSM 428 / KCTC 22496 / NCIMB 10442 / H16 / Stanier 337) (Ralstonia eutropha)).